Consider the following 259-residue polypeptide: Hemin import ATP-binding protein HmuV (259 aa).

One can recognise an ABC transporter domain in the interval 2–238; the sequence is IEARDLNVSI…ALLSEVFDCQ (237 aa). 34–41 contributes to the ATP binding site; it reads GPNGSGKS.

The protein belongs to the ABC transporter superfamily. Heme (hemin) importer (TC 3.A.1.14.5) family. As to quaternary structure, the complex is composed of two ATP-binding proteins (HmuV), two transmembrane proteins (HmuU) and a solute-binding protein (HmuT).

The protein resides in the cell inner membrane. Functionally, part of the ABC transporter complex HmuTUV involved in hemin import. Responsible for energy coupling to the transport system. This chain is Hemin import ATP-binding protein HmuV, found in Chelativorans sp. (strain BNC1).